We begin with the raw amino-acid sequence, 812 residues long: Probable inorganic carbon transporter subunit DabA (812 aa).

4 residues coordinate Zn(2+): C337, D339, H499, and C514.

The protein belongs to the inorganic carbon transporter (TC 9.A.2) DabA family. As to quaternary structure, forms a complex with DabB. Requires Zn(2+) as cofactor.

Its subcellular location is the cell inner membrane. Functionally, part of an energy-coupled inorganic carbon pump. This chain is Probable inorganic carbon transporter subunit DabA, found in Xanthomonas oryzae pv. oryzae (strain MAFF 311018).